The following is a 622-amino-acid chain: Low affinity potassium transport system protein Kup (622 aa).

12 helical membrane passes run 9-29, 49-69, 103-123, 137-157, 165-185, 213-233, 247-267, 276-296, 337-357, 363-383, 396-416, and 419-439; these read LPAI…TSPL, VFGF…IKYL, VIMG…TPAI, PQLD…LFMI, VGKL…GLGL, VSFI…VLYA, WFTV…ALLL, PFFL…AALA, IYIP…IVSF, LAAA…ILST, FVAL…TANL, and LLSG…VMTT.

This sequence belongs to the HAK/KUP transporter (TC 2.A.72) family.

It localises to the cell inner membrane. The enzyme catalyses K(+)(in) + H(+)(in) = K(+)(out) + H(+)(out). Its function is as follows. Responsible for the low-affinity transport of potassium into the cell. Likely operates as a K(+):H(+) symporter. The sequence is that of Low affinity potassium transport system protein Kup from Shigella flexneri.